The following is a 603-amino-acid chain: Prosaposin receptor GPR37 (603 aa).

The N-terminal stretch at 1–26 (MPAPGAPLSRTSRLLLLLLFKVSVSA) is a signal peptide. Residues 27–255 (ALSFVPEPRN…QESYGAYAVM (229 aa)) lie on the Extracellular side of the membrane. N36 is a glycosylation site (N-linked (GlcNAc...) asparagine). Residues 39-232 (CLGESCSPLI…GGPRRGNSTN (194 aa)) form a disordered region. Composition is skewed to basic and acidic residues over residues 51–79 (RSRD…EAEV), 145–158 (TSER…RDEI), and 165–175 (HSVKTEPEPRD). N-linked (GlcNAc...) asparagine glycans are attached at residues N212 and N229. The helical transmembrane segment at 256 to 276 (CLSVVIFGTGIIGNLAVMCIV) threads the bilayer. The Cytoplasmic portion of the chain corresponds to 277 to 289 (CHNYYMRSISNSL). The chain crosses the membrane as a helical span at residues 290–310 (LANLAFWDFLIIFFCLPLVIF). Residues 311-325 (HELTKKWLLEDFSCK) are Extracellular-facing. A disulfide bond links C324 and C409. The chain crosses the membrane as a helical span at residues 326-346 (IVPYIEVASLGVTTFTLCALC). At 347-369 (IDRFRAATNVQMYYEMIENCSST) the chain is on the cytoplasmic side. The chain crosses the membrane as a helical span at residues 370–390 (TAKLAVIWVGALLLALPEVVL). Residues 391–433 (RQLSKEDLGFSGQAPAERCVIKISPDLPDTIYVLALTYDGARL) lie on the Extracellular side of the membrane. A helical transmembrane segment spans residues 434-454 (WWYFGCYFCLPTLFTITCSLV). The Cytoplasmic portion of the chain corresponds to 455-483 (TARKIRKAEKASTRGNKRQIHLESQMNCT). A helical transmembrane segment spans residues 484–504 (VVALTILYGFCIIPENICNIV). Over 505–521 (TAYMATGVSQQTMDLLN) the chain is Extracellular. The chain crosses the membrane as a helical span at residues 522–542 (IISQFLLFFKSCVTPVLLFCL). At 543–603 (CRPFSRAFME…STFASVGTHC (61 aa)) the chain is on the cytoplasmic side.

The protein belongs to the G-protein coupled receptor 1 family. In terms of assembly, forms a complex with PRKN, STUB1 and HSP70. The amount of STUB1 in the complex increases during ER stress. STUB1 promotes the dissociation of HSP70 from PRKN, thus facilitating PRKN-mediated GPR37 ubiquitination. Interacts with PACRG. Post-translationally, the N-terminus is cleaved by ADAM10 metalloproteinase; mediating limited proteolysis leading to the release of receptor ectodomain by shedding. In addition, cleaved by FURIN between Arg-53 and Asp-54. Ubiquitinated by PRKN in the presence of UBE2E1 and UBE2L3 in the endoplasmic reticulum. The unfolded form is specifically ubiquitinated by SYVN1, which promotes its proteasomal degradation and prevents neuronal cell death. In terms of tissue distribution, highly expressed in the brain. High levels of expression were seen in fiber tracts such as the corpus callosum, anterior commissure, fornix, internal capsule, cerebral peduncles, and stria terminalis. Additionally, moderate levels of expression were seen in the pyramidal tracts and cerebellar peduncles, as well as in the spinal tract of the trigeminal nerve and the spinal fasciculi.

It localises to the cell projection. Its subcellular location is the dendrite. The protein localises to the synapse. The protein resides in the cell membrane. It is found in the endoplasmic reticulum membrane. In terms of biological role, G-protein-coupled receptor that plays a role in several physiological pathways such as resolution of inflammatory pain and oligodendrocyte differentiation. Acts as a receptor for several ligands including prosaposin, osteocalcin or neuroprotectin D1. Ligand binding induces endocytosis, followed by an ERK phosphorylation cascade. Acts as a receptor for osteocalcin (OCN) to regulate oligodendrocyte differentiation and central nervous system myelination. Mechanistically, plays a negative role in oligodendrocyte differentiation and myelination during development via activation of the ERK1/2 signaling pathway. Therefore, regulates the stability of myelin or resistance of myelin itself to demyelination. Upon activation by neuroprotectin D1 (NPD1), promotes the activation of phagocytosis in macrophages as well as the shift in cytokine release toward an anti-inflammatory profile, and thus helps to reverse inflammatory pain. In addition, the increased macrophage phagocytosis mediates protection against sepsis upon pathogen infection. Additionally, extracellular vesicles derived from efferocyte express prosaposin, which binds to macrophage GPR37 to increase expression of the efferocytosis receptor TIM4 via an ERK-AP1-dependent signaling axis, leading to increased macrophage efferocytosis efficiency and accelerated resolution of inflammation. May also act as a maturation factor of LRP6, protecting LRP6 from the endoplasmic reticulum (ER)-associated protein degradation (ERAD) and thereby promoting the Wnt/beta-catenin signaling pathway. This chain is Prosaposin receptor GPR37 (Gpr37), found in Rattus norvegicus (Rat).